We begin with the raw amino-acid sequence, 404 residues long: Cysteine desulfurase IscS (404 aa).

Residues A75–T76, N155, Q183, and S203–H205 each bind pyridoxal 5'-phosphate. K206 carries the N6-(pyridoxal phosphate)lysine modification. T243 is a binding site for pyridoxal 5'-phosphate. Catalysis depends on C328, which acts as the Cysteine persulfide intermediate. C328 is a binding site for [2Fe-2S] cluster.

It belongs to the class-V pyridoxal-phosphate-dependent aminotransferase family. NifS/IscS subfamily. In terms of assembly, homodimer. Forms a heterotetramer with IscU, interacts with other sulfur acceptors. Pyridoxal 5'-phosphate serves as cofactor.

The protein localises to the cytoplasm. It catalyses the reaction (sulfur carrier)-H + L-cysteine = (sulfur carrier)-SH + L-alanine. The protein operates within cofactor biosynthesis; iron-sulfur cluster biosynthesis. Its function is as follows. Master enzyme that delivers sulfur to a number of partners involved in Fe-S cluster assembly, tRNA modification or cofactor biosynthesis. Catalyzes the removal of elemental sulfur atoms from cysteine to produce alanine. Functions as a sulfur delivery protein for Fe-S cluster synthesis onto IscU, an Fe-S scaffold assembly protein, as well as other S acceptor proteins. The protein is Cysteine desulfurase IscS of Shewanella baltica (strain OS185).